Consider the following 347-residue polypeptide: Neutral protease 2 homolog MGG_10927 (347 aa).

An N-terminal signal peptide occupies residues 1 to 19 (MKYSVGITALLATLAQGAA). Residues 20–176 (VMSKRDIPLD…RSYLAKRTMV (157 aa)) constitute a propeptide that is removed on maturation. 2 disulfides stabilise this stretch: cysteine 180-cysteine 250 and cysteine 257-cysteine 275. Histidine 299 contributes to the Zn(2+) binding site. Glutamate 300 is an active-site residue. A Zn(2+)-binding site is contributed by histidine 303.

This sequence belongs to the peptidase M35 family. The cofactor is Zn(2+).

It is found in the secreted. The enzyme catalyses Preferential cleavage of bonds with hydrophobic residues in P1'. Also 3-Asn-|-Gln-4 and 8-Gly-|-Ser-9 bonds in insulin B chain.. In terms of biological role, secreted metalloproteinase that allows assimilation of proteinaceous substrates. Shows high activities on basic nuclear substrates such as histone and protamine. The sequence is that of Neutral protease 2 homolog MGG_10927 from Pyricularia oryzae (strain 70-15 / ATCC MYA-4617 / FGSC 8958) (Rice blast fungus).